Reading from the N-terminus, the 647-residue chain is Protein cueball (647 aa).

The N-terminal stretch at 1–22 (MLWCPSVLVPLIAVAACLPVLA) is a signal peptide. The Extracellular segment spans residues 23 to 534 (IGTPLEWEFA…CMTPSPWTSN (512 aa)). N80 and N106 each carry an N-linked (GlcNAc...) asparagine glycan. LDL-receptor class B repeat units lie at residues 119–166 (RNLF…DVCR), 167–211 (RKLY…DQLS), and 212–257 (DRIF…TNDA). A glycan (N-linked (GlcNAc...) asparagine) is linked at N175. N-linked (GlcNAc...) asparagine glycosylation occurs at N316. EGF-like domains lie at 365–401 (DEKT…SRCE) and 436–473 (EISK…ERCE). 5 disulfides stabilise this stretch: C376-C389, C391-C400, C440-C450, C444-C461, and C463-C472. N-linked (GlcNAc...) asparagine glycosylation is present at N475. Residues 535–555 (VIIVLVLGIVSCFFLVAVIVH) form a helical membrane-spanning segment. At 556 to 647 (GFRRLYKPKR…LIHNMDDDLY (92 aa)) the chain is on the cytoplasmic side.

The protein belongs to the cueball family.

The protein resides in the cell membrane. Its function is as follows. Has a role in spermatogenesis and oogenesis. The chain is Protein cueball from Drosophila persimilis (Fruit fly).